Reading from the N-terminus, the 213-residue chain is Phosphoribosylformylglycinamidine synthase subunit PurQ (213 aa).

In terms of domain architecture, Glutamine amidotransferase type-1 spans 5–213 (ACVVVYPGSN…FQSILNYLKR (209 aa)). Cys-86 functions as the Nucleophile in the catalytic mechanism. Catalysis depends on residues His-186 and Glu-188.

In terms of assembly, part of the FGAM synthase complex composed of 1 PurL, 1 PurQ and 2 PurS subunits.

The protein resides in the cytoplasm. The enzyme catalyses N(2)-formyl-N(1)-(5-phospho-beta-D-ribosyl)glycinamide + L-glutamine + ATP + H2O = 2-formamido-N(1)-(5-O-phospho-beta-D-ribosyl)acetamidine + L-glutamate + ADP + phosphate + H(+). It catalyses the reaction L-glutamine + H2O = L-glutamate + NH4(+). Its pathway is purine metabolism; IMP biosynthesis via de novo pathway; 5-amino-1-(5-phospho-D-ribosyl)imidazole from N(2)-formyl-N(1)-(5-phospho-D-ribosyl)glycinamide: step 1/2. Part of the phosphoribosylformylglycinamidine synthase complex involved in the purines biosynthetic pathway. Catalyzes the ATP-dependent conversion of formylglycinamide ribonucleotide (FGAR) and glutamine to yield formylglycinamidine ribonucleotide (FGAM) and glutamate. The FGAM synthase complex is composed of three subunits. PurQ produces an ammonia molecule by converting glutamine to glutamate. PurL transfers the ammonia molecule to FGAR to form FGAM in an ATP-dependent manner. PurS interacts with PurQ and PurL and is thought to assist in the transfer of the ammonia molecule from PurQ to PurL. The polypeptide is Phosphoribosylformylglycinamidine synthase subunit PurQ (Thermotoga maritima (strain ATCC 43589 / DSM 3109 / JCM 10099 / NBRC 100826 / MSB8)).